The chain runs to 484 residues: Glycogen synthase 2 (484 aa).

Arginine 15 serves as a coordination point for ADP-alpha-D-glucose.

The protein belongs to the glycosyltransferase 1 family. Bacterial/plant glycogen synthase subfamily.

The catalysed reaction is [(1-&gt;4)-alpha-D-glucosyl](n) + ADP-alpha-D-glucose = [(1-&gt;4)-alpha-D-glucosyl](n+1) + ADP + H(+). It functions in the pathway glycan biosynthesis; glycogen biosynthesis. Its function is as follows. Synthesizes alpha-1,4-glucan chains using ADP-glucose. This Geobacter sulfurreducens (strain ATCC 51573 / DSM 12127 / PCA) protein is Glycogen synthase 2.